The chain runs to 329 residues: Ribosomal RNA small subunit methyltransferase H (329 aa).

Residues 47–49 (GGH), Asp67, Phe93, Asp115, and Gln122 contribute to the S-adenosyl-L-methionine site.

This sequence belongs to the methyltransferase superfamily. RsmH family.

The protein localises to the cytoplasm. The enzyme catalyses cytidine(1402) in 16S rRNA + S-adenosyl-L-methionine = N(4)-methylcytidine(1402) in 16S rRNA + S-adenosyl-L-homocysteine + H(+). In terms of biological role, specifically methylates the N4 position of cytidine in position 1402 (C1402) of 16S rRNA. This chain is Ribosomal RNA small subunit methyltransferase H, found in Blochmanniella pennsylvanica (strain BPEN).